The sequence spans 196 residues: Ribosomal RNA small subunit methyltransferase G (196 aa).

Residues G77, F82, 127–128 (AE), and R140 each bind S-adenosyl-L-methionine.

This sequence belongs to the methyltransferase superfamily. RNA methyltransferase RsmG family.

The protein localises to the cytoplasm. Functionally, specifically methylates the N7 position of a guanine in 16S rRNA. The chain is Ribosomal RNA small subunit methyltransferase G from Aquifex aeolicus (strain VF5).